Here is a 36-residue protein sequence, read N- to C-terminus: Potassium channel toxin alpha-KTx 11.3 (36 aa).

Disulfide bonds link C8-C27, C13-C33, and C17-C35.

Belongs to the short scorpion toxin superfamily. Potassium channel inhibitor family. Alpha-KTx 11 subfamily. In terms of tissue distribution, expressed by the venom gland.

It localises to the secreted. Functionally, binds and inhibits voltage-sensitive potassium channels. Inhibits the vertebrate potassium channel Kv1.1/KCNA1 with low affinity. This chain is Potassium channel toxin alpha-KTx 11.3, found in Parabuthus granulatus (Granulated thick-tailed scorpion).